The primary structure comprises 416 residues: Phosphoglycerate kinase (416 aa).

14 residues coordinate (2R)-3-phosphoglycerate: Val-23, Asp-24, Phe-25, Asn-26, Gln-38, Arg-39, Ser-62, His-63, Gly-65, Arg-66, Leu-121, Arg-122, His-168, and Arg-169. Gly-212 is a binding site for ADP. Gly-212 contacts CDP. Ala-213 and Lys-214 together coordinate AMP. Ala-213 serves as a coordination point for ATP. Residue Ala-213 participates in Mg(2+) binding. Residue Asp-217 coordinates CDP. A Mg(2+)-binding site is contributed by Asp-217. Lys-218 contributes to the AMP binding site. Lys-218 contacts ATP. Gly-236 is an ADP binding site. Gly-236 is a CDP binding site. Residues Gly-237 and Gly-311 each contribute to the AMP site. Positions 237 and 311 each coordinate ATP. The CDP site is built by Gly-336 and Phe-341. Phe-341 contacts ADP. Residue Glu-342 coordinates AMP. ATP contacts are provided by Glu-342, Asp-373, and Thr-374. Residue Asp-373 participates in Mg(2+) binding.

It belongs to the phosphoglycerate kinase family. In terms of assembly, monomer. Mg(2+) serves as cofactor.

Its subcellular location is the cytoplasm. It localises to the mitochondrion. The catalysed reaction is (2R)-3-phosphoglycerate + ATP = (2R)-3-phospho-glyceroyl phosphate + ADP. It participates in carbohydrate degradation; glycolysis; pyruvate from D-glyceraldehyde 3-phosphate: step 2/5. Its function is as follows. Catalyzes one of the two ATP producing reactions in the glycolytic pathway via the reversible conversion of 1,3-diphosphoglycerate to 3-phosphoglycerate. Both L- and D- forms of purine and pyrimidine nucleotides can be used as substrates, but the activity is much lower on pyrimidines. Negatively regulates the biosynthesis of acetyl-CoA from pyruvate in the mitochondrion. The polypeptide is Phosphoglycerate kinase (PGK1) (Komagataella pastoris (Yeast)).